Reading from the N-terminus, the 462-residue chain is L-seryl-tRNA(Sec) selenium transferase (462 aa).

Lysine 295 is modified (N6-(pyridoxal phosphate)lysine).

The protein belongs to the SelA family. In terms of assembly, homodecamer; pentamer of dimers. Binds only one seryl-tRNA(Sec) per dimer. It depends on pyridoxal 5'-phosphate as a cofactor.

It localises to the cytoplasm. The catalysed reaction is L-seryl-tRNA(Sec) + selenophosphate + H(+) = L-selenocysteinyl-tRNA(Sec) + phosphate. It participates in aminoacyl-tRNA biosynthesis; selenocysteinyl-tRNA(Sec) biosynthesis; selenocysteinyl-tRNA(Sec) from L-seryl-tRNA(Sec) (bacterial route): step 1/1. Converts seryl-tRNA(Sec) to selenocysteinyl-tRNA(Sec) required for selenoprotein biosynthesis. This is L-seryl-tRNA(Sec) selenium transferase from Klebsiella pneumoniae (strain 342).